The primary structure comprises 467 residues: 3-isopropylmalate dehydratase large subunit (467 aa).

[4Fe-4S] cluster-binding residues include cysteine 347, cysteine 408, and cysteine 411.

It belongs to the aconitase/IPM isomerase family. LeuC type 1 subfamily. Heterodimer of LeuC and LeuD. [4Fe-4S] cluster is required as a cofactor.

The enzyme catalyses (2R,3S)-3-isopropylmalate = (2S)-2-isopropylmalate. Its pathway is amino-acid biosynthesis; L-leucine biosynthesis; L-leucine from 3-methyl-2-oxobutanoate: step 2/4. Functionally, catalyzes the isomerization between 2-isopropylmalate and 3-isopropylmalate, via the formation of 2-isopropylmaleate. In Bordetella pertussis (strain Tohama I / ATCC BAA-589 / NCTC 13251), this protein is 3-isopropylmalate dehydratase large subunit.